The primary structure comprises 149 residues: Transcription antitermination protein NusB (149 aa).

The protein belongs to the NusB family.

Its function is as follows. Involved in transcription antitermination. Required for transcription of ribosomal RNA (rRNA) genes. Binds specifically to the boxA antiterminator sequence of the ribosomal RNA (rrn) operons. The protein is Transcription antitermination protein NusB of Acinetobacter baylyi (strain ATCC 33305 / BD413 / ADP1).